Reading from the N-terminus, the 1442-residue chain is Protein patched homolog 1 (1442 aa).

The tract at residues 1 to 45 (MASAADALEPESGSSTAGGGSHPVRAARSARGRRRRSGGTRRAAA) is disordered. Over 1-101 (MASAADALEP…GCYIQKNCGK (101 aa)) the chain is Cytoplasmic. Residues 28–39 (RSARGRRRRSGG) are compositionally biased toward basic residues. The chain crosses the membrane as a helical span at residues 102-122 (FLVVGLLYSAFAVGLRAANLE). Residues 123–436 (TNVEELWVEV…LDDILKSFSD (314 aa)) lie on the Extracellular side of the membrane. Residues Asn-141, Asn-312, Asn-349, and Asn-414 are each glycosylated (N-linked (GlcNAc...) asparagine). Residues 437 to 457 (VSVIRVASGYLLMLAYACLTM) traverse the membrane as a helical segment. Residues 438–598 (SVIRVASGYL…LLIFPAILSM (161 aa)) enclose the SSD domain. Residues 458–472 (LRWDCAKSQGAVGLA) lie on the Cytoplasmic side of the membrane. A helical membrane pass occupies residues 473 to 493 (GVLLVALSVAAGLGLCSLIGI). The Extracellular portion of the chain corresponds to 494–501 (SFNAATTQ). Residues 502 to 522 (VLPFLALGVGVDDVFLLAHAF) form a helical membrane-spanning segment. The Cytoplasmic portion of the chain corresponds to 523–547 (SETGQNKRIPFEDRTGECLKRTGAS). A helical transmembrane segment spans residues 548-568 (VALTSISNVTAFFMAALIPIP). Residues 569–577 (ALRAFSLQA) lie on the Extracellular side of the membrane. Residues 578–598 (AVVVVFNFAMVLLIFPAILSM) traverse the membrane as a helical segment. Over 599-747 (DLYRREDRRL…HYAPFLLKPK (149 aa)) the chain is Cytoplasmic. The helical transmembrane segment at 748-768 (AKVVVIFLFLGLLGLSLYGTT) threads the bilayer. At 769–1026 (RVRDGLDLTD…WEQYIGLRHW (258 aa)) the chain is on the extracellular side. N-linked (GlcNAc...) asparagine glycosylation is found at Asn-827, Asn-874, and Asn-999. The helical transmembrane segment at 1027–1047 (LLLSISVVLACTFLVCALFLL) threads the bilayer. The Cytoplasmic portion of the chain corresponds to 1048 to 1053 (NPWTAG). Residues 1054–1074 (IIVVVLALMTVELFGMMGLIG) traverse the membrane as a helical segment. The Extracellular portion of the chain corresponds to 1075 to 1082 (IKLSAVPV). A helical transmembrane segment spans residues 1083 to 1101 (VILIASVGIGVEFTVHIAL). Over 1102 to 1120 (AFLTAIGDKNRRAVLALEH) the chain is Cytoplasmic. Residues 1121–1141 (MFAPVLDGAVSTLLGVLMLAG) form a helical membrane-spanning segment. The Extracellular segment spans residues 1142–1153 (SEFDFIVRYFFA). The chain crosses the membrane as a helical span at residues 1154–1174 (VLAILTILGVLNGLVLLPVLL). At 1175-1442 (SFFGPYPEVS…EERTAGKISE (268 aa)) the chain is on the cytoplasmic side. Disordered stretches follow at residues 1188 to 1231 (GRNR…TTVS) and 1266 to 1338 (STVV…LNHK). The segment covering 1217-1226 (SDSSDSEYSS) has biased composition (low complexity). Residues 1276 to 1293 (QSSPRLQSNPEAGTQQVW) show a composition bias toward polar residues.

This sequence belongs to the patched family. Glycosylation is necessary for SHH binding. Expression is seen in the embryonic neural tube, sclerotome, visceral mesoderm, and limb bud.

The protein resides in the membrane. Acts as a receptor for sonic hedgehog (SHH), indian hedgehog (IHH) and desert hedgehog (DHH). Associates with the smoothened protein (SMO) to transduce the hedgehog's proteins signal. This chain is Protein patched homolog 1 (PTCH1), found in Gallus gallus (Chicken).